Here is a 492-residue protein sequence, read N- to C-terminus: Catalase-1 (492 aa).

Active-site residues include His65 and Asn138. A heme-binding site is contributed by Tyr348.

It belongs to the catalase family. As to quaternary structure, homotetramer and heterotetramer. At least six or seven isozymes are produced from a mixture of 3 gene products. Interacts with NCA1. Interacts with LSD1. Requires heme as cofactor.

It is found in the cytoplasm. The enzyme catalyses 2 H2O2 = O2 + 2 H2O. Functionally, occurs in almost all aerobically respiring organisms and serves to protect cells from the toxic effects of hydrogen peroxide. This chain is Catalase-1 (CAT1), found in Arabidopsis thaliana (Mouse-ear cress).